The chain runs to 255 residues: Acetylglutamate kinase (255 aa).

Residues Gly40 to Gly41, Arg62, and Asn157 contribute to the substrate site.

The protein belongs to the acetylglutamate kinase family. ArgB subfamily.

The protein localises to the cytoplasm. The catalysed reaction is N-acetyl-L-glutamate + ATP = N-acetyl-L-glutamyl 5-phosphate + ADP. It participates in amino-acid biosynthesis; L-arginine biosynthesis; N(2)-acetyl-L-ornithine from L-glutamate: step 2/4. In terms of biological role, catalyzes the ATP-dependent phosphorylation of N-acetyl-L-glutamate. The protein is Acetylglutamate kinase of Parabacteroides distasonis (strain ATCC 8503 / DSM 20701 / CIP 104284 / JCM 5825 / NCTC 11152).